Here is a 340-residue protein sequence, read N- to C-terminus: Protein RecA (340 aa).

65–72 (GPESGGKT) provides a ligand contact to ATP.

Belongs to the RecA family.

The protein localises to the cytoplasm. Its function is as follows. Can catalyze the hydrolysis of ATP in the presence of single-stranded DNA, the ATP-dependent uptake of single-stranded DNA by duplex DNA, and the ATP-dependent hybridization of homologous single-stranded DNAs. It interacts with LexA causing its activation and leading to its autocatalytic cleavage. In Thermus thermophilus (strain ATCC BAA-163 / DSM 7039 / HB27), this protein is Protein RecA.